A 280-amino-acid polypeptide reads, in one-letter code: NLP effector protein Pc553546 (280 aa).

The first 19 residues, Met-1–Gly-19, serve as a signal peptide directing secretion. The Hepta-peptide GHRHDWE motif signature appears at Ala-123 to Ala-129. 2 N-linked (GlcNAc...) asparagine glycosylation sites follow: Asn-142 and Asn-209.

It belongs to the Necrosis inducing protein (NPP1) family.

It is found in the secreted. Secreted effector that contributes strongly to virulence during infection by P.capsici. This chain is NLP effector protein Pc553546, found in Phytophthora capsici.